Consider the following 153-residue polypeptide: Pheromone-binding protein Gp-9 (153 aa).

A signal peptide spans 1 to 19; that stretch reads MKTFVLHIFIFALVAFASA. Disulfide bonds link Cys37-Cys77, Cys73-Cys129, and Cys118-Cys138.

Belongs to the PBP/GOBP family. In terms of assembly, homodimer.

It localises to the secreted. Functionally, colony queen number, a major feature of social organization, is associated with worker genotype for Gp-9. Colonies are headed by either a single reproductive queen (monogyne form) or multiple queens (polygyne form). Differences in worker Gp-9 genotypes between social forms may cause differences in workers' abilities to recognize queens and regulate their numbers. The polypeptide is Pheromone-binding protein Gp-9 (Solenopsis n. sp. (strain JP-2002) (Fire ant)).